The primary structure comprises 164 residues: Endoribonuclease YbeY (164 aa).

Zn(2+)-binding residues include His111, His115, and His121. Residues 140 to 164 (ELGHPDPYADDDAQKHSTVTIKDSE) are disordered. A compositionally biased stretch (polar residues) spans 155–164 (HSTVTIKDSE).

Belongs to the endoribonuclease YbeY family. It depends on Zn(2+) as a cofactor.

The protein localises to the cytoplasm. Functionally, single strand-specific metallo-endoribonuclease involved in late-stage 70S ribosome quality control and in maturation of the 3' terminus of the 16S rRNA. This chain is Endoribonuclease YbeY, found in Pseudomonas fluorescens (strain SBW25).